The following is a 583-amino-acid chain: Transmembrane protein 108 (583 aa).

The chain crosses the membrane as a helical span at residues 7–27 (ALYCQLLSFLLTLALTEALVF). The interval 31–176 (EPSPRESLQV…ATIRRPPRPP (146 aa)) is interacts with SH3GL2. Disordered stretches follow at residues 71–360 (VTPT…GVFA) and 376–404 (VPSE…STVS). 2 stretches are compositionally biased toward polar residues: residues 80-93 (PSSQ…TTTP) and 100-122 (PTNT…SLST). A compositionally biased stretch (low complexity) spans 177 to 187 (GSSRKGAGSSP). Positions 180 to 413 (RKGAGSSPRP…SQAEEKAVAT (234 aa)) are interacts with DST (isoform 1). Composition is skewed to polar residues over residues 251–273 (YSSS…SWVP), 310–319 (ASGTPASQQR), and 333–357 (DGSS…TNSG). Residues 477–497 (IAWVILAISVPISSCSVLLTV) form a helical membrane-spanning segment. Residues 498–583 (CCLRRKKKPA…FVGNDQVSEI (86 aa)) are interaction with CYFIP2.

In terms of assembly, interacts with DST (isoform 1). Interacts with SH3GL2. Interacts (via N-terminus) with CYFIP1 and CYFIP2; the interactions associate TMEM108 with the WAVE1 complex. In terms of processing, glycosylated.

The protein localises to the membrane. It localises to the postsynaptic density. The protein resides in the endosome membrane. Its subcellular location is the cell projection. It is found in the axon. The protein localises to the dendrite. It localises to the early endosome. Its function is as follows. Transmembrane protein required for proper cognitive functions. Involved in the development of dentate gyrus (DG) neuron circuitry, is necessary for AMPA receptors surface expression and proper excitatory postsynaptic currents of DG granule neurons. Regulates the organization and stability of the microtubule network of sensory neurons to allow axonal transport. Through the interaction with DST, mediates the docking of the dynein/dynactin motor complex to vesicle cargos for retrograde axonal transport. In hippocampal neurons, required for BDNF-dependent dendrite outgrowth. Cooperates with SH3GL2 and recruits the WAVE1 complex to facilitate actin-dependent BDNF:NTRK2 early endocytic trafficking and mediate signaling from early endosomes. This Bos taurus (Bovine) protein is Transmembrane protein 108.